The sequence spans 127 residues: Protein ApaG (127 aa).

The ApaG domain occupies 3-127; it reads DDPRYRVEVE…FVLSVPRTLH (125 aa).

This is Protein ApaG from Xanthomonas oryzae pv. oryzae (strain MAFF 311018).